A 1255-amino-acid chain; its full sequence is Structural polyprotein (1255 aa).

The tract at residues 1-33 (MFPFQPMYPMQPMPYRNPFAAPRRPWFPRTDPF) is necessary for nucleocapsid assembly and virus assembly. The tract at residues 33-68 (FLAMQVQELTRSMANLTFKQRREAPPEGPPAKKPKR) is host transcription inhibition. The Supraphysiological nuclear export signal signature appears at 41–48 (LTRSMANL). The segment at 44-119 (SMANLTFKQR…KKPGKRQRMV (76 aa)) is disordered. The N-linked (GlcNAc...) asparagine; by host glycan is linked to Asn47. Residues 64–68 (KKPKR) carry the Nuclear localization signal motif. Residues 80 to 92 (GKKKKNQGKKKAK) are compositionally biased toward basic residues. The tract at residues 91–127 (AKTGPPNPKAQNGNKKKTNKKPGKRQRMVMKLESDKT) is binding to the viral RNA. Thr93 and Thr108 each carry phosphothreonine. A compositionally biased stretch (basic residues) spans 104-118 (NKKKTNKKPGKRQRM). A ribosome-binding region spans residues 112 to 126 (PGKRQRMVMKLESDK). Ser124 bears the Phosphoserine mark. In terms of domain architecture, Peptidase S3 spans 126 to 275 (KTFPIMLEGK…KYTPENCEQW (150 aa)). The residue at position 127 (Thr127) is a Phosphothreonine. His152 acts as the Charge relay system in catalysis. An interaction with spike glycoprotein E2 region spans residues 168 to 173 (KKASKY). Residues Asp174 and Ser226 each act as charge relay system in the active site. Residues 260-264 (EKGVT) are interaction with spike glycoprotein E2. Residues 276 to 287 (SLVTTMCLLANV) form a functions as an uncleaved signal peptide for the precursor of protein E3/E2 region. At 276–701 (SLVTTMCLLA…HYYHRYPMST (426 aa)) the chain is on the extracellular side. 7 cysteine pairs are disulfide-bonded: Cys282/Cys291, Cys353/Cys457, Cys356/Cys361, Cys424/Cys438, Cys485/Cys600, Cys534/Cys560, and Cys536/Cys554. N-linked (GlcNAc...) asparagine; by host glycosylation occurs at Asn286. Asn652 is a glycosylation site (N-linked (GlcNAc...) asparagine; by host). A helical membrane pass occupies residues 702-722 (ILGLSICAAIVTVSIAASTWL). Residues 723-757 (LCKSRVSCLTPYRLTPNARMPLCLAVLCCARTARA) are Cytoplasmic-facing. Residues 725–729 (KSRVS) form an interaction with the capsid protein region. Residues Cys730, Cys750, and Cys751 are each lipidated (S-palmitoyl cysteine; by host). Residues 730–750 (CLTPYRLTPNARMPLCLAVLC) form a transient transmembrane before p62-6K protein processing region. A disulfide bridge connects residues Cys730 and Cys751. The Extracellular portion of the chain corresponds to 758 to 772 (ETTWESLDHLWNNNQ). Residues 773–793 (QMFWIQLLIPLAALIVVTRLL) traverse the membrane as a helical segment. A topological domain (cytoplasmic) is located at residue Arg794. A helical transmembrane segment spans residues 795–815 (CVCCVVPFLVVAGAAGAGAYE). At 816 to 1225 (HATTMPSQAG…SKTAWTWLTS (410 aa)) the chain is on the extracellular side. 4 cysteine pairs are disulfide-bonded: Cys862-Cys927, Cys875-Cys907, Cys876-Cys909, and Cys881-Cys891. The segment at 897–914 (VYPFMWGGAYCFCDTENT) is E1 fusion peptide loop. N-linked (GlcNAc...) asparagine; by host glycans are attached at residues Asn947 and Asn1083. 4 disulfide bridges follow: Cys1072-Cys1084, Cys1114-Cys1189, Cys1119-Cys1193, and Cys1141-Cys1183. Residues 1226 to 1246 (LLGGSAVIIIIGLVLATIVAM) form a helical membrane-spanning segment. Residues 1247–1255 (YVLTNQKHN) lie on the Cytoplasmic side of the membrane.

Homodimer. Homomultimer. Interacts with host karyopherin KPNA4; this interaction allows the nuclear import of the viral capsid protein. Interacts with spike glycoprotein E2. Interacts with host IRAK1; the interaction leads to inhibition of IRAK1-dependent signaling. Part of a tetrameric complex composed of host CRM1, host importin alpha/beta dimer and the viral capsid; this complex blocks the receptor-mediated transport through the nuclear pore. Interacts with host phosphatase PPP1CA; this interaction dephosphorylates the capsid protein, which increases its ability to bind to the viral genome. As to quaternary structure, the precursor of protein E3/E2 and E1 form a heterodimer shortly after synthesis. In terms of assembly, interacts with spike glycoprotein E2. The precursor of protein E3/E2 and E1 form a heterodimer shortly after synthesis. Processing of the precursor of protein E3/E2 into E2 and E3 results in a heterodimer of the spike glycoproteins E2 and E1. Spike at virion surface are constituted of three E2-E1 heterodimers. After target cell attachment and endocytosis, E1 change conformation to form homotrimers. Interacts with 6K protein. Interacts with host LDLRAD3; this interaction mediates viral entry to the host cell. Interacts with spike glycoprotein E1. Processing of the precursor of protein E3/E2 into E2 and E3 results in a heterodimer of the spike glycoproteins E2 and E1. Spike at virion surface are constituted of a trimer of E2-E1 heterodimers. Interacts with 6K protein. Interacts with host LDLRAD3; this interaction mediates viral entry to the host cell. As to quaternary structure, oligomer. Interacts with spike glycoprotein E1. Interacts with spike glycoprotein E2. In terms of processing, structural polyprotein: Specific enzymatic cleavages in vivo yield mature proteins. Capsid protein is auto-cleaved during polyprotein translation, unmasking a signal peptide at the N-terminus of the precursor of E3/E2. The remaining polyprotein is then targeted to the host endoplasmic reticulum, where host signal peptidase cleaves it into pE2, 6K and E1 proteins. pE2 is further processed to mature E3 and E2 by host furin in trans-Golgi vesicle. Phosphorylated on serine and threonine residues. Post-translationally, palmitoylated via thioester bonds. These palmitoylations may induce disruption of the C-terminus transmembrane. This would result in the reorientation of E2 C-terminus from lumenal to cytoplasmic side. In terms of processing, N-glycosylated. Palmitoylated via thioester bonds.

It localises to the virion. The protein localises to the host cytoplasm. It is found in the host cell membrane. Its subcellular location is the host nucleus. The protein resides in the virion membrane. It localises to the host Golgi apparatus. The protein localises to the host trans-Golgi network. It is found in the host endoplasmic reticulum. The catalysed reaction is Autocatalytic release of the core protein from the N-terminus of the togavirus structural polyprotein by hydrolysis of a -Trp-|-Ser- bond.. In terms of biological role, forms an icosahedral capsid with a T=4 symmetry composed of 240 copies of the capsid protein surrounded by a lipid membrane through which penetrate 80 spikes composed of trimers of E1-E2 heterodimers. The capsid protein binds to the viral RNA genome at a site adjacent to a ribosome binding site for viral genome translation following genome release. Possesses a protease activity that results in its autocatalytic cleavage from the nascent structural protein. Following its self-cleavage, the capsid protein transiently associates with ribosomes, and within several minutes the protein binds to viral RNA and rapidly assembles into icosahedric core particles. The resulting nucleocapsid eventually associates with the cytoplasmic domain of the spike glycoprotein E2 at the cell membrane, leading to budding and formation of mature virions. In case of infection, new virions attach to target cells and after clathrin-mediated endocytosis their membrane fuses with the host endosomal membrane. This leads to the release of the nucleocapsid into the cytoplasm, followed by an uncoating event necessary for the genomic RNA to become accessible. The uncoating might be triggered by the interaction of capsid proteins with ribosomes. Binding of ribosomes would release the genomic RNA since the same region is genomic RNA-binding and ribosome-binding. Specifically inhibits interleukin-1 receptor-associated kinase 1/IRAK1-dependent signaling during viral entry, representing a means by which the alphaviruses may evade innate immune detection and activation prior to viral gene expression. Inhibits host transcription. Forms a tetrameric complex with XPO1/CRM1 and the nuclear import receptor importin. This complex blocks the central channel of host nuclear pores thereby inhibiting the receptor-mediated nuclear transport and thus the host mRNA and rRNA transcription. The inhibition of transcription is linked to a cytopathic effect on the host cell. Functionally, provides the signal sequence for the translocation of the precursor of protein E3/E2 to the host endoplasmic reticulum. Furin-cleaved E3 remains associated with spike glycoprotein E1 and mediates pH protection of the latter during the transport via the secretory pathway. After virion release from the host cell, the assembly protein E3 is gradually released in the extracellular space. Plays a role in viral attachment to target host cell, by binding to the cell receptor LDLRAD3. Synthesized as a p62 precursor which is processed by furin at the cell membrane just before virion budding, giving rise to E2-E1 heterodimer. The p62-E1 heterodimer is stable, whereas E2-E1 is unstable and dissociate at low pH. p62 is processed at the last step, presumably to avoid E1 fusion activation before its final export to cell surface. E2 C-terminus contains a transitory transmembrane that would be disrupted by palmitoylation, resulting in reorientation of the C-terminal tail from lumenal to cytoplasmic side. This step is critical since E2 C-terminus is involved in budding by interacting with capsid proteins. This release of E2 C-terminus in cytoplasm occurs lately in protein export, and precludes premature assembly of particles at the endoplasmic reticulum membrane. Its function is as follows. Acts as a viroporin that participates in virus glycoprotein processing and transport to the plasma membrane, cell permeabilization and budding of viral particles. Disrupts the calcium homeostasis of the cell, probably at the endoplasmic reticulum level. This leads to cytoplasmic calcium elevation. Because of its lipophilic properties, the 6K protein is postulated to influence the selection of lipids that interact with the transmembrane domains of the glycoproteins, which, in turn, affects the deformability of the bilayer required for the extreme curvature that occurs as budding proceeds. Present in low amount in virions, about 3% compared to viral glycoproteins. In terms of biological role, class II viral fusion protein. Fusion activity is inactive as long as E1 is bound to E2 in mature virion. After virus attachment to cell receptor LDLRAD3 and endocytosis, acidification of the endosome induce dissociation of E1/E2 heterodimer and concomitant trimerization of the E1 subunits. This E1 trimer is fusion active, and promotes release of viral nucleocapsid in cytoplasm after endosome and viral membrane fusion. Efficient fusion requires the presence of cholesterol and sphingolipid in the target membrane. The sequence is that of Structural polyprotein from Venezuelan equine encephalitis virus (strain 3880) (VEEV).